The sequence spans 84 residues: Large ribosomal subunit protein bL27 (84 aa).

Belongs to the bacterial ribosomal protein bL27 family.

In Buchnera aphidicola subsp. Schizaphis graminum (strain Sg), this protein is Large ribosomal subunit protein bL27.